Consider the following 512-residue polypeptide: 2-isopropylmalate synthase (512 aa).

The region spanning 4–266 is the Pyruvate carboxyltransferase domain; sequence IQFFDTTLRD…ETNIVLNQFK (263 aa). Mn(2+)-binding residues include D13, H201, H203, and N237. A regulatory domain region spans residues 390–512; the sequence is ELKHLQVQYV…SKQADFEEVK (123 aa).

The protein belongs to the alpha-IPM synthase/homocitrate synthase family. LeuA type 1 subfamily. In terms of assembly, homodimer. It depends on Mn(2+) as a cofactor.

The protein resides in the cytoplasm. It carries out the reaction 3-methyl-2-oxobutanoate + acetyl-CoA + H2O = (2S)-2-isopropylmalate + CoA + H(+). It participates in amino-acid biosynthesis; L-leucine biosynthesis; L-leucine from 3-methyl-2-oxobutanoate: step 1/4. Catalyzes the condensation of the acetyl group of acetyl-CoA with 3-methyl-2-oxobutanoate (2-ketoisovalerate) to form 3-carboxy-3-hydroxy-4-methylpentanoate (2-isopropylmalate). In Listeria innocua serovar 6a (strain ATCC BAA-680 / CLIP 11262), this protein is 2-isopropylmalate synthase.